The primary structure comprises 228 residues: ATP-dependent dethiobiotin synthetase BioD (228 aa).

Residue 12–17 (DVGKTY) participates in ATP binding. Thr-16 contacts Mg(2+). Lys-37 is a catalytic residue. ATP is bound by residues Asp-53, 114-117 (EGMG), 174-175 (ND), 203-205 (PFI), and Asn-210. Positions 53 and 114 each coordinate Mg(2+).

Belongs to the dethiobiotin synthetase family. As to quaternary structure, homodimer. The cofactor is Mg(2+).

Its subcellular location is the cytoplasm. The catalysed reaction is (7R,8S)-7,8-diammoniononanoate + CO2 + ATP = (4R,5S)-dethiobiotin + ADP + phosphate + 3 H(+). It functions in the pathway cofactor biosynthesis; biotin biosynthesis; biotin from 7,8-diaminononanoate: step 1/2. Its function is as follows. Catalyzes a mechanistically unusual reaction, the ATP-dependent insertion of CO2 between the N7 and N8 nitrogen atoms of 7,8-diaminopelargonic acid (DAPA, also called 7,8-diammoniononanoate) to form a ureido ring. The polypeptide is ATP-dependent dethiobiotin synthetase BioD (Nitrosopumilus maritimus (strain SCM1)).